The sequence spans 159 residues: Phosphopantetheine adenylyltransferase (159 aa).

T9 is a substrate binding site. ATP is bound by residues 9–10 and H17; that span reads TF. Positions 41, 73, and 87 each coordinate substrate. Residues 88–90, E98, and 123–129 each bind ATP; these read GLR and YSFISST.

The protein belongs to the bacterial CoaD family. In terms of assembly, homohexamer. It depends on Mg(2+) as a cofactor.

It is found in the cytoplasm. The enzyme catalyses (R)-4'-phosphopantetheine + ATP + H(+) = 3'-dephospho-CoA + diphosphate. It participates in cofactor biosynthesis; coenzyme A biosynthesis; CoA from (R)-pantothenate: step 4/5. Its function is as follows. Reversibly transfers an adenylyl group from ATP to 4'-phosphopantetheine, yielding dephospho-CoA (dPCoA) and pyrophosphate. This is Phosphopantetheine adenylyltransferase from Pseudomonas fluorescens (strain ATCC BAA-477 / NRRL B-23932 / Pf-5).